We begin with the raw amino-acid sequence, 455 residues long: tRNA modification GTPase MnmE (455 aa).

Arg-26, Glu-86, and Arg-125 together coordinate (6S)-5-formyl-5,6,7,8-tetrahydrofolate. In terms of domain architecture, TrmE-type G spans 222–376 (GLKTAIIGRP…VEEKINQIFF (155 aa)). Position 232 (Asn-232) interacts with K(+). Residues 232–237 (NVGKSS), 251–257 (TDIAGTT), and 276–279 (DTAG) each bind GTP. Ser-236 lines the Mg(2+) pocket. K(+) is bound by residues Thr-251, Ile-253, and Thr-256. Residue Thr-257 participates in Mg(2+) binding. Lys-455 lines the (6S)-5-formyl-5,6,7,8-tetrahydrofolate pocket.

Belongs to the TRAFAC class TrmE-Era-EngA-EngB-Septin-like GTPase superfamily. TrmE GTPase family. In terms of assembly, homodimer. Heterotetramer of two MnmE and two MnmG subunits. K(+) serves as cofactor.

It localises to the cytoplasm. In terms of biological role, exhibits a very high intrinsic GTPase hydrolysis rate. Involved in the addition of a carboxymethylaminomethyl (cmnm) group at the wobble position (U34) of certain tRNAs, forming tRNA-cmnm(5)s(2)U34. The sequence is that of tRNA modification GTPase MnmE from Lactococcus lactis subsp. cremoris (strain MG1363).